The primary structure comprises 272 residues: uncharacterized protein (272 aa).

Composition is skewed to basic and acidic residues over residues 136–156 (VRRE…HIDI) and 231–240 (GCKESRRNEP). Disordered regions lie at residues 136–157 (VRRE…IDIH) and 174–272 (VKPK…WAAF). Residues 243–252 (DLSQLKKNLP) are compositionally biased toward polar residues. A compositionally biased stretch (low complexity) spans 253–272 (STAGSGSSKSTGAASGWAAF).

This is an uncharacterized protein from Arabidopsis thaliana (Mouse-ear cress).